We begin with the raw amino-acid sequence, 282 residues long: ATP synthase subunit a (282 aa).

Transmembrane regions (helical) follow at residues 38 to 58 (VDSM…LWLA), 97 to 117 (FVAP…AMDM), 145 to 165 (VVPT…LLLC), 187 to 207 (FGSH…EFVA), 225 to 247 (LIFI…GHIV), and 261 to 281 (TLQA…AHEG).

Belongs to the ATPase A chain family. In terms of assembly, F-type ATPases have 2 components, CF(1) - the catalytic core - and CF(0) - the membrane proton channel. CF(1) has five subunits: alpha(3), beta(3), gamma(1), delta(1), epsilon(1). CF(0) has three main subunits: a(1), b(2) and c(9-12). The alpha and beta chains form an alternating ring which encloses part of the gamma chain. CF(1) is attached to CF(0) by a central stalk formed by the gamma and epsilon chains, while a peripheral stalk is formed by the delta and b chains.

It localises to the cell inner membrane. In terms of biological role, key component of the proton channel; it plays a direct role in the translocation of protons across the membrane. In Azoarcus sp. (strain BH72), this protein is ATP synthase subunit a.